The chain runs to 554 residues: Arginine--tRNA ligase (554 aa).

The 'HIGH' region signature appears at 132 to 142; the sequence is ANPTGPLHIGH.

This sequence belongs to the class-I aminoacyl-tRNA synthetase family. As to quaternary structure, monomer.

The protein localises to the cytoplasm. The catalysed reaction is tRNA(Arg) + L-arginine + ATP = L-arginyl-tRNA(Arg) + AMP + diphosphate. In Pseudarthrobacter chlorophenolicus (strain ATCC 700700 / DSM 12829 / CIP 107037 / JCM 12360 / KCTC 9906 / NCIMB 13794 / A6) (Arthrobacter chlorophenolicus), this protein is Arginine--tRNA ligase.